The following is a 407-amino-acid chain: Bifunctional enzyme IspD/IspF (407 aa).

A 2-C-methyl-D-erythritol 4-phosphate cytidylyltransferase region spans residues 1 to 247 (MVHIQADGAR…RLSHNALPDV (247 aa)). Residues 248–407 (RTGNGYDVHQ…ATVVFQGKPQ (160 aa)) form a 2-C-methyl-D-erythritol 2,4-cyclodiphosphate synthase region. 2 residues coordinate a divalent metal cation: aspartate 254 and histidine 256. 4-CDP-2-C-methyl-D-erythritol 2-phosphate is bound by residues 254-256 (DVH) and 280-281 (HS). Histidine 288 provides a ligand contact to a divalent metal cation. 4-CDP-2-C-methyl-D-erythritol 2-phosphate is bound by residues 302-304 (DIG), 378-381 (TTNE), phenylalanine 385, and arginine 388.

This sequence in the N-terminal section; belongs to the IspD/TarI cytidylyltransferase family. IspD subfamily. In the C-terminal section; belongs to the IspF family. The cofactor is a divalent metal cation.

The catalysed reaction is 2-C-methyl-D-erythritol 4-phosphate + CTP + H(+) = 4-CDP-2-C-methyl-D-erythritol + diphosphate. The enzyme catalyses 4-CDP-2-C-methyl-D-erythritol 2-phosphate = 2-C-methyl-D-erythritol 2,4-cyclic diphosphate + CMP. It functions in the pathway isoprenoid biosynthesis; isopentenyl diphosphate biosynthesis via DXP pathway; isopentenyl diphosphate from 1-deoxy-D-xylulose 5-phosphate: step 2/6. The protein operates within isoprenoid biosynthesis; isopentenyl diphosphate biosynthesis via DXP pathway; isopentenyl diphosphate from 1-deoxy-D-xylulose 5-phosphate: step 4/6. Its function is as follows. Bifunctional enzyme that catalyzes the formation of 4-diphosphocytidyl-2-C-methyl-D-erythritol from CTP and 2-C-methyl-D-erythritol 4-phosphate (MEP) (IspD), and catalyzes the conversion of 4-diphosphocytidyl-2-C-methyl-D-erythritol 2-phosphate (CDP-ME2P) to 2-C-methyl-D-erythritol 2,4-cyclodiphosphate (ME-CPP) with a corresponding release of cytidine 5-monophosphate (CMP) (IspF). The polypeptide is Bifunctional enzyme IspD/IspF (Allorhizobium ampelinum (strain ATCC BAA-846 / DSM 112012 / S4) (Agrobacterium vitis (strain S4))).